We begin with the raw amino-acid sequence, 487 residues long: DNA-dependent metalloprotease SPRTN (487 aa).

Position 1 is an N-acetylmethionine (methionine 1). The region spanning 45 to 212 is the SprT-like domain; it reads LQGLFVLFND…KTCGGTYIKI (168 aa). Histidine 111 serves as a coordination point for Zn(2+). Residue glutamate 112 is part of the active site. 2 residues coordinate Zn(2+): histidine 115 and histidine 130. The interval 219-248 is disordered; the sequence is SKKGKGKTKLRKQPVSEAENKDKPNRGEKQ. Positions 220-230 are enriched in basic residues; it reads KKGKGKTKLRK. An N6-acetyllysine modification is found at lysine 230. The segment covering 236–247 has biased composition (basic and acidic residues); it reads AENKDKPNRGEK. The short motif at 253–261 is the SHP-box element; that stretch reads FTGKGYVLG. A Phosphoserine modification is found at serine 267. A compositionally biased stretch (polar residues) spans 280-289; the sequence is SQEPLSQDHS. Positions 280 to 317 are disordered; that stretch reads SQEPLSQDHSANALRPHSKTEVKFEQNGPSKKTSVASP. Lysine 302 participates in a covalent cross-link: Glycyl lysine isopeptide (Lys-Gly) (interchain with G-Cter in SUMO2). Residues 306-317 are compositionally biased toward polar residues; the sequence is NGPSKKTSVASP. Residues 324-331 carry the PIP-box motif; it reads QNVLSNYF. Lysine 340 is covalently cross-linked (Glycyl lysine isopeptide (Lys-Gly) (interchain with G-Cter in SUMO2); alternate). Lysine 340 participates in a covalent cross-link: Glycyl lysine isopeptide (Lys-Gly) (interchain with G-Cter in ubiquitin); alternate. Positions 347–379 are disordered; it reads GSPVKSLTVGDSTTKSVSAGSQRRVTSSRTSLR. Position 373 is a phosphoserine (serine 373). A Nuclear localization signal motif is present at residues 401 to 412; the sequence is GKLPSKRPRIED. A Glycyl lysine isopeptide (Lys-Gly) (interchain with G-Cter in ubiquitin) cross-link involves residue lysine 413. Glycyl lysine isopeptide (Lys-Gly) (interchain with G-Cter in SUMO2) cross-links involve residues lysine 422 and lysine 423. The tract at residues 427-455 is disordered; that stretch reads QSGGGDVTSSSHPPAAAQSPSGASGQSRV. A compositionally biased stretch (low complexity) spans 435–453; sequence SSSHPPAAAQSPSGASGQS. The UBZ4-type zinc finger occupies 455-482; it reads VVHCPVCQDEVSETQINEHLDWCLERDS. Positions 458, 461, 473, and 477 each coordinate Zn(2+). A Glycyl lysine isopeptide (Lys-Gly) (interchain with G-Cter in SUMO2) cross-link involves residue lysine 486.

Belongs to the Spartan family. As to quaternary structure, homodimer. Interacts (VIA PIP-box) with PCNA (when ubiquitinated). Interacts (via its SHP-box) with VCP/p97. Interacts with RAD18. Interacts with KCTD13 and POLD3. The cofactor is Zn(2+). Autocatalytically cleaved in response to double-stranded DNA-binding: autocatalytic cleavage takes place in trans and leads to inactivation. Post-translationally, monoubiquitinated; monoubiquitination promotes exclusion from chromatin. Deubiquitinated by VCPIP1: deubiquitination is required for subsequent acetylation and recruitment to chromatin and DNA damage sites. In terms of processing, acetylated following deubiquitination by VCPIP1, leading to recruitment to chromatin and DNA damage sites. Phosphorylation by CHEK1 promotes recruitment to chromatin.

It localises to the nucleus. Its subcellular location is the chromosome. DNA-binding activates the protease activity: single-stranded DNA-binding specifically activates ability to cleave covalent DNA-protein cross-links (DPCs). In contrast, double-stranded DNA-binding specifically activates autocatalytic cleavage, and subsequent inactivation. Its function is as follows. DNA-dependent metalloendopeptidase that mediates the proteolytic cleavage of covalent DNA-protein cross-links (DPCs) during DNA synthesis, thereby playing a key role in maintaining genomic integrity. DPCs are highly toxic DNA lesions that interfere with essential chromatin transactions, such as replication and transcription, and which are induced by reactive agents, such as UV light or formaldehyde. Associates with the DNA replication machinery and specifically removes DPCs during DNA synthesis. Catalyzes proteolytic cleavage of the HMCES DNA-protein cross-link following unfolding by the BRIP1/FANCJ helicase. Acts as a pleiotropic protease for DNA-binding proteins cross-linked with DNA, such as TOP1, TOP2A, histones H3 and H4. Mediates degradation of DPCs that are not ubiquitinated, while it is not able to degrade ubiquitinated DPCs. SPRTN activation requires polymerase collision with DPCs followed by helicase bypass of DPCs. Involved in recruitment of VCP/p97 to sites of DNA damage. Also acts as an activator of CHEK1 during normal DNA replication by mediating proteolytic cleavage of CHEK1, thereby promoting CHEK1 removal from chromatin and subsequent activation. Does not activate CHEK1 in response to DNA damage. May also act as a 'reader' of ubiquitinated PCNA: recruited to sites of UV damage and interacts with ubiquitinated PCNA and RAD18, the E3 ubiquitin ligase that monoubiquitinates PCNA. Facilitates chromatin association of RAD18 and is required for efficient PCNA monoubiquitination, promoting a feed-forward loop to enhance PCNA ubiquitination and translesion DNA synthesis. The sequence is that of DNA-dependent metalloprotease SPRTN from Bos taurus (Bovine).